The sequence spans 1292 residues: MADPAAPTPAAPAPAQAPAPAPEAVPAPAAAPVPAPAPASDSASGPSSDSGPEAGSQRLLFSHDLVSGRYRGSVHFGLVRLIHGEDSDSEGEEEGRGSSGCSEAGGAGHEEGRASPLRRGYVRVQWYPEGVKQHVKETKLKLEDRSVVPRDVVRHMRSTDSQCGTVIDVNIDCAVKLIGTNCIIYPVNSKDLQHIWPFMYGDYIAYDCWLGKVYDLKNQIILKLSNGARCSMNTEDGAKLYDVCPHVSDSGLFFDDSYGFYPGQVLIGPAKIFSSVQWLSGVKPVLSTKSKFRVVVEEVQVVELKVTWITKSFCPGGTDSVSPPPSVITQENLGRVKRLGCFDHAQRQLGERCLYVFPAKVEPAKIAWECPEKNCAQGEGSMAKKVKRLLKKQVVRIMSCSPDTQCSRDHSMEDPDKKGESKTKSEAESASPEETPDGSASPVEMQDEGAEEPHEAGEQLPPFLLKEGRDDRLHSAEQDADDEAADDTDDTSSVTSSASSTTSSQSGSGTSRKKSIPLSIKNLKRKHKRKKNKITRDFKPGDRVAVEVVTTMTSADVMWQDGSVECNIRSNDLFPVHHLDNNEFCPGDFVVDKRVQSCPDPAVYGVVQSGDHIGRTCMVKWFKLRPSGDDVELIGEEEDVSVYDIADHPDFRFRTTDIVIRIGNTEDGAPHKEDEPSVGQVARVDVSSKVEVVWADNSKTIILPQHLYNIESEIEESDYDSVEGSTSGASSDEWEDDSDSWETDNGLVEDEHPKIEEPPIPPLEQPVAPEDKGVVISEEAATAAVQGAVAMAAPMAGLMEKAGKDGPPKSFRELKEAIKILESLKNMTVEQLLTGSPTSPTVEPEKPTREKKFLDDIKKLQENLKKTLDNVAIVEEEKMEAVPDVERKEDKPEGQSPVKAEWPSETPVLCQQCGGKPGVTFTSAKGEVFSVLEFAPSNHSFKKIEFQPPEAKKFFSTVRKEMALLATSLPEGIMVKTFEDRMDLFSALIKGPTRTPYEDGLYLFDIQLPNIYPAVPPHFCYLSQCSGRLNPNLYDNGKVCVSLLGTWIGKGTERWTSKSSLLQVLISIQGLILVNEPYYNEAGFDSDRGLQEGYENSRCYNEMALIRVVQSMTQLVRRPPEVFEQEIRQHFSTGGWRLVNRIESWLETHALLEKAQALPNGVPKASSSPEPPAVAELSDSGQQEPEDGGPAPGEASQGSDSEGGAQGLASASRDHTDQTSETAPDASVPPSVKPKKRRKSYRSFLPEKSGYPDIGFPLFPLSKGFIKSIRGVLTQFRAALLEAGMPECTEDK.

Residues 1 to 37 (MADPAAPTPAAPAPAQAPAPAPEAVPAPAAAPVPAPA) show a composition bias toward pro residues. Disordered stretches follow at residues 1–56 (MADP…EAGS) and 85–114 (EDSD…EGRA). Over residues 38 to 56 (PASDSASGPSSDSGPEAGS) the composition is skewed to low complexity. A phosphoserine mark is found at Ser50, Ser87, Ser89, Ser399, and Ser401. Disordered regions lie at residues 401–459 (SPDT…AGEQ), 472–519 (RLHS…IPLS), and 714–746 (IEES…TDNG). Over residues 406-427 (CSRDHSMEDPDKKGESKTKSEA) the composition is skewed to basic and acidic residues. At Ser441 the chain carries Phosphoserine. Over residues 478–490 (QDADDEAADDTDD) the composition is skewed to acidic residues. Phosphothreonine occurs at positions 488 and 491. The segment covering 491 to 510 (TSSVTSSASSTTSSQSGSGT) has biased composition (low complexity). A Nuclear localization signal motif is present at residues 512 to 536 (RKKSIPLSIKNLKRKHKRKKNKITR). Position 515 is a phosphoserine (Ser515). Residues 732 to 742 (DEWEDDSDSWE) are compositionally biased toward acidic residues. A coiled-coil region spans residues 812–882 (RELKEAIKIL…IVEEEKMEAV (71 aa)). Ser836 carries the phosphoserine modification. Phosphothreonine is present on Thr838. At Ser839 the chain carries Phosphoserine. A compositionally biased stretch (basic and acidic residues) spans 882–893 (VPDVERKEDKPE). A disordered region spans residues 882–903 (VPDVERKEDKPEGQSPVKAEWP). Residue Ser896 is modified to Phosphoserine. A UBC core domain is found at 953–1113 (KFFSTVRKEM…ALIRVVQSMT (161 aa)). Cys1040 serves as the catalytic Glycyl thioester intermediate. A disordered region spans residues 1160–1248 (NGVPKASSSP…KSYRSFLPEK (89 aa)).

It belongs to the ubiquitin-conjugating enzyme family. As to quaternary structure, interacts with CPNE1 (via VWFA domain) and CPNE4 (via VWFA domain). Interacts with UBR2. Phosphorylated. Phosphorylation affects subcellular location. Post-translationally, ubiquitinated: autoubiquitinates, possibly affecting its subcellular location. Predominantly expressed in skeletal muscle and heart.

The protein resides in the cytoplasm. Its subcellular location is the nucleus. It catalyses the reaction S-ubiquitinyl-[E1 ubiquitin-activating enzyme]-L-cysteine + [acceptor protein]-L-lysine = [E1 ubiquitin-activating enzyme]-L-cysteine + N(6)-monoubiquitinyl-[acceptor protein]-L-lysine.. Its pathway is protein modification; protein ubiquitination. With respect to regulation, inhibited by phenylarsine oxide (PAO). E2/E3 hybrid ubiquitin-protein ligase that displays both E2 and E3 ligase activities and mediates monoubiquitination of target proteins. Negatively regulates TRAF6-mediated NF-kappa-B activation independently of its E2 activity. Acts as a positive regulator of BMP7 signaling by mediating monoubiquitination of SMAD6, thereby regulating adipogenesis. Mediates monoubiquitination at different sites of the nuclear localization signal (NLS) of BAP1, leading to cytoplasmic retention of BAP1. Also able to monoubiquitinate the NLS of other chromatin-associated proteins, such as INO80 and CXXC1, affecting their subcellular location. Acts as a regulator of retrograde transport by assisting the TRIM27:MAGEL2 E3 ubiquitin ligase complex to mediate 'Lys-63'-linked ubiquitination of WASHC1, leading to promote endosomal F-actin assembly. This Homo sapiens (Human) protein is (E3-independent) E2 ubiquitin-conjugating enzyme (UBE2O).